Reading from the N-terminus, the 218-residue chain is Pyridoxine/pyridoxamine 5'-phosphate oxidase (218 aa).

Residues 14–17 (RREY) and Lys72 contribute to the substrate site. FMN contacts are provided by residues 67 to 72 (RIVLLK), 82 to 83 (YT), Arg88, Lys89, and Gln111. Tyr129, Arg133, and Ser137 together coordinate substrate. FMN-binding positions include 146–147 (QS) and Trp191. 197–199 (RLH) is a binding site for substrate. Residue Arg201 coordinates FMN.

Belongs to the pyridoxamine 5'-phosphate oxidase family. Homodimer. Requires FMN as cofactor.

It catalyses the reaction pyridoxamine 5'-phosphate + O2 + H2O = pyridoxal 5'-phosphate + H2O2 + NH4(+). It carries out the reaction pyridoxine 5'-phosphate + O2 = pyridoxal 5'-phosphate + H2O2. It participates in cofactor metabolism; pyridoxal 5'-phosphate salvage; pyridoxal 5'-phosphate from pyridoxamine 5'-phosphate: step 1/1. Its pathway is cofactor metabolism; pyridoxal 5'-phosphate salvage; pyridoxal 5'-phosphate from pyridoxine 5'-phosphate: step 1/1. Catalyzes the oxidation of either pyridoxine 5'-phosphate (PNP) or pyridoxamine 5'-phosphate (PMP) into pyridoxal 5'-phosphate (PLP). This is Pyridoxine/pyridoxamine 5'-phosphate oxidase from Escherichia coli O45:K1 (strain S88 / ExPEC).